The sequence spans 131 residues: MSPDWLDTIHWNPDGLIPAIAQETGTGKVLMLAWMNRESLQRTLETGEAVYWSRSRQRLWHKGESSGNTQRVVQMRLDCDRDTLLLEVEQRGGIACHTGRHNCFYHRYQDGDWQVVEPVLKDPDQMYGDKT.

D78 contacts Mg(2+). C79 contacts Zn(2+). The Mg(2+) site is built by D80 and D82. Zn(2+) is bound by residues C96 and C103.

It belongs to the PRA-CH family. In terms of assembly, homodimer. The cofactor is Mg(2+). Zn(2+) is required as a cofactor.

It is found in the cytoplasm. It catalyses the reaction 1-(5-phospho-beta-D-ribosyl)-5'-AMP + H2O = 1-(5-phospho-beta-D-ribosyl)-5-[(5-phospho-beta-D-ribosylamino)methylideneamino]imidazole-4-carboxamide. Its pathway is amino-acid biosynthesis; L-histidine biosynthesis; L-histidine from 5-phospho-alpha-D-ribose 1-diphosphate: step 3/9. Its function is as follows. Catalyzes the hydrolysis of the adenine ring of phosphoribosyl-AMP. This is Phosphoribosyl-AMP cyclohydrolase from Thioalkalivibrio sulfidiphilus (strain HL-EbGR7).